A 263-amino-acid polypeptide reads, in one-letter code: Phosphatidylglycerol--prolipoprotein diacylglyceryl transferase (263 aa).

The next 4 helical transmembrane spans lie at 15–35 (ISIHWYAICIVSGLLLAVYLA), 52–72 (FILLAFPIAIVGARLYYVIFQ), 83–103 (IFAIWNGGIAIYGGLIAGAAV), and 112–132 (AIAVLDFLDIAAPGVMIAQSI). Residue arginine 134 coordinates a 1,2-diacyl-sn-glycero-3-phospho-(1'-sn-glycerol). 3 helical membrane-spanning segments follow: residues 170-190 (VPTFLYESLWNLVGFSIILGL), 200-220 (GDVTSFYLIWYGLGRFVIEGM), and 227-247 (FVGLRVSQWVSISIIILGAVL).

It belongs to the Lgt family.

The protein localises to the cell membrane. The enzyme catalyses L-cysteinyl-[prolipoprotein] + a 1,2-diacyl-sn-glycero-3-phospho-(1'-sn-glycerol) = an S-1,2-diacyl-sn-glyceryl-L-cysteinyl-[prolipoprotein] + sn-glycerol 1-phosphate + H(+). Its pathway is protein modification; lipoprotein biosynthesis (diacylglyceryl transfer). In terms of biological role, catalyzes the transfer of the diacylglyceryl group from phosphatidylglycerol to the sulfhydryl group of the N-terminal cysteine of a prolipoprotein, the first step in the formation of mature lipoproteins. This is Phosphatidylglycerol--prolipoprotein diacylglyceryl transferase from Streptococcus thermophilus (strain ATCC BAA-491 / LMD-9).